We begin with the raw amino-acid sequence, 406 residues long: Argininosuccinate synthase (406 aa).

Residues 10-18 and alanine 37 each bind ATP; that span reads AYSGGLDTS. L-citrulline-binding residues include tyrosine 88 and serine 93. Residue glycine 118 participates in ATP binding. Residues threonine 120, asparagine 124, and aspartate 125 each contribute to the L-aspartate site. L-citrulline is bound at residue asparagine 124. L-citrulline is bound by residues arginine 128, serine 179, serine 188, glutamate 264, and tyrosine 276.

It belongs to the argininosuccinate synthase family. Type 1 subfamily. In terms of assembly, homotetramer.

It is found in the cytoplasm. It carries out the reaction L-citrulline + L-aspartate + ATP = 2-(N(omega)-L-arginino)succinate + AMP + diphosphate + H(+). It participates in amino-acid biosynthesis; L-arginine biosynthesis; L-arginine from L-ornithine and carbamoyl phosphate: step 2/3. This is Argininosuccinate synthase from Azotobacter vinelandii (strain DJ / ATCC BAA-1303).